The primary structure comprises 255 residues: uncharacterized protein (255 aa).

Belongs to the methyltransferase superfamily.

This is an uncharacterized protein from Mycobacterium marinum (strain ATCC BAA-535 / M).